The chain runs to 332 residues: Alpha/beta hydrolase domain-containing protein aho-3 (332 aa).

A compositionally biased stretch (low complexity) spans 1–15; the sequence is MSSGAPSGSSMSSTP. The tract at residues 1-24 is disordered; that stretch reads MSSGAPSGSSMSSTPGSPPPRAGG. Active-site charge relay system residues include Ser191, Asp256, and His285.

This sequence belongs to the AB hydrolase superfamily. ABHD17 family. Palmitoylated on cysteine residues located in a cysteine cluster at the N-terminus which promotes membrane localization and localization to sensory neuron endings. In terms of tissue distribution, expressed in a subset of neurons including AIY, HSN, ADF, AFD, AWC, AWB and NSM, hypodermis, pharyngeal muscle and intestine.

The protein resides in the cell membrane. It localises to the cytoplasmic vesicle membrane. The catalysed reaction is S-hexadecanoyl-L-cysteinyl-[protein] + H2O = L-cysteinyl-[protein] + hexadecanoate + H(+). Its function is as follows. Hydrolyzes fatty acids from S-acylated cysteine residues in proteins. Acts in sensory neurons including AWC to regulate starvation-induced thermotaxis plasticity and salt learning behavior. This chain is Alpha/beta hydrolase domain-containing protein aho-3, found in Caenorhabditis elegans.